Here is a 568-residue protein sequence, read N- to C-terminus: Urease subunit alpha (568 aa).

In terms of domain architecture, Urease spans 130-568 (GGIDTHIHFI…LPMAQRYFLF (439 aa)). The Ni(2+) site is built by histidine 135, histidine 137, and lysine 218. Lysine 218 carries the N6-carboxylysine modification. Histidine 220 is a binding site for substrate. Ni(2+)-binding residues include histidine 247 and histidine 273. Histidine 321 acts as the Proton donor in catalysis. Position 361 (aspartate 361) interacts with Ni(2+).

This sequence belongs to the metallo-dependent hydrolases superfamily. Urease alpha subunit family. Heterotrimer of UreA (gamma), UreB (beta) and UreC (alpha) subunits. Three heterotrimers associate to form the active enzyme. Ni cation is required as a cofactor. In terms of processing, carboxylation allows a single lysine to coordinate two nickel ions.

It localises to the cytoplasm. The catalysed reaction is urea + 2 H2O + H(+) = hydrogencarbonate + 2 NH4(+). It functions in the pathway nitrogen metabolism; urea degradation; CO(2) and NH(3) from urea (urease route): step 1/1. This is Urease subunit alpha from Burkholderia ambifaria (strain ATCC BAA-244 / DSM 16087 / CCUG 44356 / LMG 19182 / AMMD) (Burkholderia cepacia (strain AMMD)).